The following is a 54-amino-acid chain: MAVPKKRTSKAKKNSRKANWKRKAAKSAQKSLSLAKSILRGKTTSFVYRLYVDE.

Positions 1 to 25 (MAVPKKRTSKAKKNSRKANWKRKAA) are enriched in basic residues. The segment at 1–26 (MAVPKKRTSKAKKNSRKANWKRKAAK) is disordered.

Belongs to the bacterial ribosomal protein bL32 family.

Its subcellular location is the plastid. The protein resides in the chloroplast. The protein is Large ribosomal subunit protein bL32c of Thalassiosira pseudonana (Marine diatom).